The following is a 183-amino-acid chain: Oleosin-B2 (183 aa).

The segment at 1–23 (QASIFSRFFRMFSFIFPFVNVIK) is polar. Transmembrane regions (helical) follow at residues 24 to 44 (LIIA…ALGG), 46 to 66 (AVAL…LVPA), and 72 to 92 (LLAS…GLIM). The interval 24–95 (LIIASVTSLV…TGIGLIMGLV (72 aa)) is hydrophobic.

This sequence belongs to the oleosin family. As to expression, the full-length protein is found in the tapetal lipid bodies of immature anthers, the proteolytically cleaved C-terminal product is found on the coats of pollen grains. Not present in seeds.

Its subcellular location is the lipid droplet. It is found in the membrane. Many of the major pollen coat proteins are derived from endoproteolytic cleavage of oleosin-like proteins. The sequence is that of Oleosin-B2 (OlnB2) from Brassica napus (Rape).